A 426-amino-acid polypeptide reads, in one-letter code: L-cysteine:1D-myo-inositol 2-amino-2-deoxy-alpha-D-glucopyranoside ligase (426 aa).

Zn(2+) is bound at residue C45. Residues 45–48 (CGIT), T60, and 83–85 (NVT) each bind L-cysteinyl-5'-AMP. The 'HIGH' region motif lies at 47-57 (ITPYDATHIGH). The 'ERGGDP' region motif lies at 199–204 (ERGGDP). Position 239 (W239) interacts with L-cysteinyl-5'-AMP. C243 lines the Zn(2+) pocket. Residue 261-263 (GSD) coordinates L-cysteinyl-5'-AMP. H268 provides a ligand contact to Zn(2+). V294 provides a ligand contact to L-cysteinyl-5'-AMP. Residues 300 to 304 (KMSKS) carry the 'KMSKS' region motif.

It belongs to the class-I aminoacyl-tRNA synthetase family. MshC subfamily. In terms of assembly, monomer. Zn(2+) serves as cofactor.

It catalyses the reaction 1D-myo-inositol 2-amino-2-deoxy-alpha-D-glucopyranoside + L-cysteine + ATP = 1D-myo-inositol 2-(L-cysteinylamino)-2-deoxy-alpha-D-glucopyranoside + AMP + diphosphate + H(+). In terms of biological role, catalyzes the ATP-dependent condensation of GlcN-Ins and L-cysteine to form L-Cys-GlcN-Ins. This chain is L-cysteine:1D-myo-inositol 2-amino-2-deoxy-alpha-D-glucopyranoside ligase, found in Clavibacter michiganensis subsp. michiganensis (strain NCPPB 382).